Consider the following 478-residue polypeptide: Zinc finger and SCAN domain-containing protein 26 (478 aa).

K17 participates in a covalent cross-link: Glycyl lysine isopeptide (Lys-Gly) (interchain with G-Cter in SUMO2). In terms of domain architecture, SCAN box spans 51-133 (CKQFRQLRYE…VVLEDLQLDL (83 aa)). Disordered regions lie at residues 159 to 181 (GVQEQQVRHECEVTKPEKEKGEE) and 200 to 226 (ESSGKISEPMEAHNEGSNLERHQAKPK). 2 stretches are compositionally biased toward basic and acidic residues: residues 164-181 (QVRHECEVTKPEKEKGEE) and 207-226 (EPMEAHNEGSNLERHQAKPK). A C2H2-type 1; degenerate zinc finger spans residues 231 to 253 (YKCSEREQRFIQHLDLIEHASTH). 7 C2H2-type zinc fingers span residues 282–304 (HQCHECGKAFQRSSHLVRHQKIH), 310–332 (YQCNECGKVFSQNAGLLEHLRIH), 338–360 (YLCIHCGKNFRRSSHLNRHQRIH), 366–388 (CECKECGKTFSQALLLTHHQRIH), 394–416 (HQCNECGKAFSLTSDLIRHHRIH), 422–444 (FKCNICQKAFRLNSHLAQHVRIH), and 450–472 (YQCSECGEAFRQRSGLFQHQRYH).

Its subcellular location is the nucleus. Its function is as follows. May be involved in transcriptional regulation. The sequence is that of Zinc finger and SCAN domain-containing protein 26 (ZSCAN26) from Homo sapiens (Human).